Here is a 246-residue protein sequence, read N- to C-terminus: 4-hydroxy-tetrahydrodipicolinate reductase (246 aa).

NAD(+) is bound by residues 8–13 (GAKGRM), 74–76 (GTT), and 101–104 (APNF). His131 acts as the Proton donor/acceptor in catalysis. Residue His132 participates in (S)-2,3,4,5-tetrahydrodipicolinate binding. Lys135 acts as the Proton donor in catalysis. (S)-2,3,4,5-tetrahydrodipicolinate is bound at residue 141-142 (GT).

This sequence belongs to the DapB family.

It is found in the cytoplasm. The catalysed reaction is (S)-2,3,4,5-tetrahydrodipicolinate + NAD(+) + H2O = (2S,4S)-4-hydroxy-2,3,4,5-tetrahydrodipicolinate + NADH + H(+). It carries out the reaction (S)-2,3,4,5-tetrahydrodipicolinate + NADP(+) + H2O = (2S,4S)-4-hydroxy-2,3,4,5-tetrahydrodipicolinate + NADPH + H(+). It participates in amino-acid biosynthesis; L-lysine biosynthesis via DAP pathway; (S)-tetrahydrodipicolinate from L-aspartate: step 4/4. Its function is as follows. Catalyzes the conversion of 4-hydroxy-tetrahydrodipicolinate (HTPA) to tetrahydrodipicolinate. The protein is 4-hydroxy-tetrahydrodipicolinate reductase of Cutibacterium acnes (strain DSM 16379 / KPA171202) (Propionibacterium acnes).